A 238-amino-acid chain; its full sequence is Type III pantothenate kinase (238 aa).

6 to 13 contacts ATP; it reads DSGNTRIK. Substrate-binding positions include Tyr-90 and 97-100; that span reads GVDR. Residue Asp-99 is the Proton acceptor of the active site. An ATP-binding site is contributed by Thr-122. Thr-172 provides a ligand contact to substrate.

Belongs to the type III pantothenate kinase family. Homodimer. The cofactor is NH4(+). K(+) is required as a cofactor.

The protein resides in the cytoplasm. It carries out the reaction (R)-pantothenate + ATP = (R)-4'-phosphopantothenate + ADP + H(+). It participates in cofactor biosynthesis; coenzyme A biosynthesis; CoA from (R)-pantothenate: step 1/5. Its function is as follows. Catalyzes the phosphorylation of pantothenate (Pan), the first step in CoA biosynthesis. In Dechloromonas aromatica (strain RCB), this protein is Type III pantothenate kinase.